We begin with the raw amino-acid sequence, 416 residues long: MMTIEQLGQRAKVASRALVSLTTKDKNQFLAFLAEELVAQTDMILAENAKDLAKAAEHGISEIMCDRLRLTADRIHAMAHGVRQVADLADPIGEVIKGYTNLDGLKITQKRVPLGVIAMIFESRPNVSIDAFSLAFKTNNAIILRGGKDALYSNMALVKLVRNALEASAITPDAVQLIEDTSHAVAEELMQATDYIDVLIPRGGARLIQTVKEKAKVPVIETGVGNVHIYVDEAADLEMAVKVVINAKTQRPSVCNAAESLIIHEKVGATFIPMLEAAISKVQQVEWRADEQAKALFSKAVLATEEDYAAEFLDYIMSVHLVSSLDEAISWINQYTSHHSEAIITANINAAERFQDLVDSAAVYVNASTRFTDGFVFGLGAEIGISTQKMHARGPMGLEALTSSKYLINGNGQIRS.

This sequence belongs to the gamma-glutamyl phosphate reductase family.

Its subcellular location is the cytoplasm. The catalysed reaction is L-glutamate 5-semialdehyde + phosphate + NADP(+) = L-glutamyl 5-phosphate + NADPH + H(+). The protein operates within amino-acid biosynthesis; L-proline biosynthesis; L-glutamate 5-semialdehyde from L-glutamate: step 2/2. Its function is as follows. Catalyzes the NADPH-dependent reduction of L-glutamate 5-phosphate into L-glutamate 5-semialdehyde and phosphate. The product spontaneously undergoes cyclization to form 1-pyrroline-5-carboxylate. In Streptococcus equi subsp. zooepidemicus (strain MGCS10565), this protein is Gamma-glutamyl phosphate reductase.